Consider the following 310-residue polypeptide: Coproporphyrin III ferrochelatase (310 aa).

Fe-coproporphyrin III is bound at residue Tyr13. Tyr13 serves as a coordination point for N-methylmesoporphyrin. Glu20 is a Mg(2+) binding site. Residue Arg30 participates in Fe-coproporphyrin III binding. 31-33 (RGR) lines the N-methylmesoporphyrin pocket. Arg46 is a Mg(2+) binding site. Fe-coproporphyrin III is bound by residues 46-47 (RY), Ser54, and Tyr125. N-methylmesoporphyrin-binding residues include His183 and Lys188. His183 serves as a coordination point for Fe(2+). Residue Glu264 participates in Fe(2+) binding. Positions 268 and 272 each coordinate Mg(2+).

It belongs to the ferrochelatase family. In terms of assembly, monomer. Interacts with frataxin/Fra.

It localises to the cytoplasm. The enzyme catalyses Fe-coproporphyrin III + 2 H(+) = coproporphyrin III + Fe(2+). It participates in porphyrin-containing compound metabolism; protoheme biosynthesis. Its activity is regulated as follows. Stimulated by Mg(2+). Inhibited by Cd(2+). Inhibited by N-methylmesoporphyrin (N-MeMP) and 2,4-disulfonic acid deuteroporphyrin IX (dSDP). Functionally, involved in coproporphyrin-dependent heme b biosynthesis. Catalyzes the insertion of ferrous iron into coproporphyrin III to form Fe-coproporphyrin III. It can also insert iron into protoporphyrin IX. Has weaker activity with 2,4 disulfonate, deuteroporphyrin and 2,4 hydroxyethyl. In vitro, can also use Zn(2+) or Cu(2+). The protein is Coproporphyrin III ferrochelatase of Bacillus subtilis (strain 168).